Here is a 497-residue protein sequence, read N- to C-terminus: Serine hydroxymethyltransferase (497 aa).

(6S)-5,6,7,8-tetrahydrofolate contacts are provided by residues Leu176 and 180 to 182 (GHL). Lys289 is modified (N6-(pyridoxal phosphate)lysine).

This sequence belongs to the SHMT family. In terms of assembly, homodimer. Pyridoxal 5'-phosphate is required as a cofactor.

Its subcellular location is the cytoplasm. The enzyme catalyses (6R)-5,10-methylene-5,6,7,8-tetrahydrofolate + glycine + H2O = (6S)-5,6,7,8-tetrahydrofolate + L-serine. It participates in one-carbon metabolism; tetrahydrofolate interconversion. It functions in the pathway amino-acid biosynthesis; glycine biosynthesis; glycine from L-serine: step 1/1. Catalyzes the reversible interconversion of serine and glycine with tetrahydrofolate (THF) serving as the one-carbon carrier. This reaction serves as the major source of one-carbon groups required for the biosynthesis of purines, thymidylate, methionine, and other important biomolecules. Also exhibits THF-independent aldolase activity toward beta-hydroxyamino acids, producing glycine and aldehydes, via a retro-aldol mechanism. The chain is Serine hydroxymethyltransferase from Chlamydia caviae (strain ATCC VR-813 / DSM 19441 / 03DC25 / GPIC) (Chlamydophila caviae).